The following is a 396-amino-acid chain: S-adenosylmethionine synthase (396 aa).

H16 contributes to the ATP binding site. D18 lines the Mg(2+) pocket. K(+) is bound at residue E44. L-methionine contacts are provided by E57 and Q100. Residues 100–110 (QSPDIAQGVNE) are flexible loop. ATP-binding positions include 175-177 (DAK), 242-243 (RF), D251, 257-258 (RK), A274, and K278. Position 251 (D251) interacts with L-methionine. K282 provides a ligand contact to L-methionine.

The protein belongs to the AdoMet synthase family. Homotetramer; dimer of dimers. The cofactor is Mg(2+). Requires K(+) as cofactor.

The protein localises to the cytoplasm. The enzyme catalyses L-methionine + ATP + H2O = S-adenosyl-L-methionine + phosphate + diphosphate. It participates in amino-acid biosynthesis; S-adenosyl-L-methionine biosynthesis; S-adenosyl-L-methionine from L-methionine: step 1/1. Its function is as follows. Catalyzes the formation of S-adenosylmethionine (AdoMet) from methionine and ATP. The overall synthetic reaction is composed of two sequential steps, AdoMet formation and the subsequent tripolyphosphate hydrolysis which occurs prior to release of AdoMet from the enzyme. The protein is S-adenosylmethionine synthase of Streptococcus suis (strain 05ZYH33).